The sequence spans 220 residues: MPLLESTLHIRHLGRQDYESVWHAMQHYTDNRDENSQDEIWVVEHTPVFTQGQAGKSEHILNPGDIPVIQVDRGGQVTYHGPGQLVIYPLLDIKRLKVGVRQLVTHIEQSIVNMLKRYDVEAYAKADAPGVYVEERKVASLGLRIRKGCSFHGLALNVDMDMSPFQRINPCGYAGMEMIQCKQLGGPQTVEEAGKQLVETLSQELGLANLVHHQGLPESL.

In terms of domain architecture, BPL/LPL catalytic spans 34–209 (ENSQDEIWVV…TLSQELGLAN (176 aa)). Substrate contacts are provided by residues 73–80 (RGGQVTYH), 140–142 (SLG), and 153–155 (GLA). C171 serves as the catalytic Acyl-thioester intermediate.

It belongs to the LipB family.

It localises to the cytoplasm. The catalysed reaction is octanoyl-[ACP] + L-lysyl-[protein] = N(6)-octanoyl-L-lysyl-[protein] + holo-[ACP] + H(+). Its pathway is protein modification; protein lipoylation via endogenous pathway; protein N(6)-(lipoyl)lysine from octanoyl-[acyl-carrier-protein]: step 1/2. Its function is as follows. Catalyzes the transfer of endogenously produced octanoic acid from octanoyl-acyl-carrier-protein onto the lipoyl domains of lipoate-dependent enzymes. Lipoyl-ACP can also act as a substrate although octanoyl-ACP is likely to be the physiological substrate. The protein is Octanoyltransferase of Shewanella piezotolerans (strain WP3 / JCM 13877).